The sequence spans 518 residues: Probable bifunctional methylthioribulose-1-phosphate dehydratase/enolase-phosphatase E1 (518 aa).

Residues 1–242 are methylthioribulose-1-phosphate dehydratase; it reads MACCGGGRGE…AIKLYQLGID (242 aa). Cys114 is a substrate binding site. The Zn(2+) site is built by His132 and His134. Glu157 (proton donor/acceptor; for methylthioribulose-1-phosphate dehydratase activity) is an active-site residue. His207 is a binding site for Zn(2+). Positions 279–518 are enolase-phosphatase E1; it reads VVLDIEGTTT…FRTIKSFSEI (240 aa). Residues Asp282 and Glu284 each contribute to the Mg(2+) site. Residues 417–418 and Lys451 contribute to the substrate site; that span reads SS. Residue Asp477 participates in Mg(2+) binding.

It in the N-terminal section; belongs to the aldolase class II family. MtnB subfamily. In the C-terminal section; belongs to the HAD-like hydrolase superfamily. MasA/MtnC family. Zn(2+) is required as a cofactor. The cofactor is Mg(2+).

It carries out the reaction 5-(methylsulfanyl)-D-ribulose 1-phosphate = 5-methylsulfanyl-2,3-dioxopentyl phosphate + H2O. The enzyme catalyses 5-methylsulfanyl-2,3-dioxopentyl phosphate + H2O = 1,2-dihydroxy-5-(methylsulfanyl)pent-1-en-3-one + phosphate. The protein operates within amino-acid biosynthesis; L-methionine biosynthesis via salvage pathway; L-methionine from S-methyl-5-thio-alpha-D-ribose 1-phosphate: step 2/6. It participates in amino-acid biosynthesis; L-methionine biosynthesis via salvage pathway; L-methionine from S-methyl-5-thio-alpha-D-ribose 1-phosphate: step 3/6. It functions in the pathway amino-acid biosynthesis; L-methionine biosynthesis via salvage pathway; L-methionine from S-methyl-5-thio-alpha-D-ribose 1-phosphate: step 4/6. This Oryza sativa subsp. indica (Rice) protein is Probable bifunctional methylthioribulose-1-phosphate dehydratase/enolase-phosphatase E1.